The chain runs to 390 residues: Mannitol-1-phosphate 5-dehydrogenase (390 aa).

3–14 provides a ligand contact to NAD(+); it reads ALHFGAGNIGRG.

Belongs to the mannitol dehydrogenase family.

It carries out the reaction D-mannitol 1-phosphate + NAD(+) = beta-D-fructose 6-phosphate + NADH + H(+). This is Mannitol-1-phosphate 5-dehydrogenase from Buchnera aphidicola subsp. Baizongia pistaciae (strain Bp).